The primary structure comprises 1647 residues: MAP kinase-activating death domain protein (1647 aa).

The uDENN domain maps to 14–268; the sequence is YLVIVGARHP…VPVSGQKRVD (255 aa). Residues 108–122 are compositionally biased toward basic and acidic residues; it reads EKGEGGAGSRGKEGT. Positions 108 to 168 are disordered; it reads EKGEGGAGSR…GKRRAKAGSR (61 aa). Over residues 128-141 the composition is skewed to low complexity; it reads SEEGGTESSESGSS. The span at 142–157 shows a compositional bias: polar residues; that stretch reads LQPLSADSTPDVNQSP. Residue Ser156 is modified to Phosphoserine. Residues 158–167 show a composition bias toward basic residues; sequence RGKRRAKAGS. The cDENN domain maps to 289 to 429; that stretch reads RFTLVDFPLH…ESLELKKHLK (141 aa). Positions 431 to 565 constitute a dDENN domain; sequence ALASMSLNTQ…LNPTNYAFQR (135 aa). Disordered regions lie at residues 604-636 and 678-842; these read ALSV…SSYS and NQKE…STEG. Residues 615–630 show a composition bias toward acidic residues; the sequence is SEPTDDSGSDSMDYDD. 2 positions are modified to phosphoserine: Ser689 and Ser692. Over residues 689–699 the composition is skewed to polar residues; sequence SENSQENPPLR. The segment covering 700-712 has biased composition (low complexity); that stretch reads SSSSTTASSSPST. Positions 750–768 are enriched in basic and acidic residues; the sequence is NVDRRQAEIGEGSVRRRIY. A compositionally biased stretch (polar residues) spans 790–804; that stretch reads ESYTPRFSQHVSGNR. Residues Ser813, Ser818, and Ser820 each carry the phosphoserine modification. The segment covering 827-840 has biased composition (low complexity); it reads RASSPNSTVSNTST. Ser858, Ser862, Ser916, Ser921, and Ser930 each carry phosphoserine. Disordered regions lie at residues 913-941, 1051-1110, and 1146-1243; these read QKSS…SSEN, KEPD…DTRS, and VFDL…DSEI. Positions 932 to 941 are enriched in polar residues; that stretch reads QGRSSNSSEN. Phosphoserine is present on Ser1059. A phosphothreonine mark is found at Thr1061 and Thr1066. Ser1110 bears the Phosphoserine mark. Polar residues-rich tracts occupy residues 1158 to 1173, 1189 to 1207, and 1234 to 1243; these read QISA…SSQR, RSSS…SSGE, and SRGTLSDSEI. Thr1237 bears the Phosphothreonine mark. A phosphoserine mark is found at Ser1239 and Ser1270. The Death domain maps to 1340–1415; it reads GMDQGPQEMI…GLVYSQQINE (76 aa).

The protein belongs to the MADD family. Interacts (via death domain) with TNFRSF1A (via death domain). Interacts with PIDD1. Interacts with YWHAZ. Interacts (via death domain) with KIF1B; links the motor KIF1B to Rab3-carrying vesicles in anterograde synaptic vesicle transport. Interacts with KIF1A. Interacts (via uDENN domain) with RAB3A, RAB3B, RAB3C and RAB3D; the GTP-bound form of the Rab proteins is preferred for interaction. Expressed in testis, ovary, brain and heart. Expressed in spleen, thymus, prostate, testis, ovary, small instestine and colon. Expressed in liver. In terms of tissue distribution, not detected in the brain, breast, kidney, lung, ovary, pancreas, testis, uterus, stomach and thyroid. As to expression, expressed in the brain, breast, kidney, lung, ovary, pancreas, testis, uterus, stomach and thyroid.

The protein localises to the cell membrane. Its subcellular location is the cytoplasm. It localises to the cell projection. It is found in the axon. Its function is as follows. Guanyl-nucleotide exchange factor that regulates small GTPases of the Rab family. Converts GDP-bound inactive form of RAB27A and RAB27B to the GTP-bound active forms. Converts GDP-bound inactive form of RAB3A, RAB3C and RAB3D to the GTP-bound active forms, GTPases involved in synaptic vesicle exocytosis and vesicle secretion. Plays a role in synaptic vesicle formation and in vesicle trafficking at the neuromuscular junction. Involved in up-regulating a post-docking step of synaptic exocytosis in central synapses. Probably by binding to the motor proteins KIF1B and KIF1A, mediates motor-dependent transport of GTP-RAB3A-positive vesicles to the presynaptic nerve terminals. Plays a role in TNFA-mediated activation of the MAPK pathway, including ERK1/2. May link TNFRSF1A with MAP kinase activation. May be involved in the regulation of TNFA-induced apoptosis. This is MAP kinase-activating death domain protein from Homo sapiens (Human).